Reading from the N-terminus, the 181-residue chain is Ribosome maturation factor RimM (181 aa).

A PRC barrel domain is found at 98–177; the sequence is EGEFFYCDLI…KITTHNAKTL (80 aa).

This sequence belongs to the RimM family. Binds ribosomal protein uS19.

Its subcellular location is the cytoplasm. Its function is as follows. An accessory protein needed during the final step in the assembly of 30S ribosomal subunit, possibly for assembly of the head region. Essential for efficient processing of 16S rRNA. May be needed both before and after RbfA during the maturation of 16S rRNA. It has affinity for free ribosomal 30S subunits but not for 70S ribosomes. The chain is Ribosome maturation factor RimM from Helicobacter pylori (strain J99 / ATCC 700824) (Campylobacter pylori J99).